The chain runs to 1231 residues: Cohesin subunit SA-2 (1231 aa).

Residue Met1 is modified to N-acetylmethionine. A disordered region spans residues 1–75 (MIAAPEIPTD…GPNRMNGHHQ (75 aa)). The span at 36–48 (KQGKGKTCKKGKK) shows a compositional bias: basic residues. Positions 293-378 (FVHRYRDAIA…SRFKDRIVSM (86 aa)) constitute an SCD domain. Lys607 is modified (N6-acetyllysine). Residues Ser1058, Ser1061, Ser1064, and Ser1065 each carry the phosphoserine modification. The segment at 1064–1083 (SSRGSTVRSKKSKPSTGKRK) is disordered. A compositionally biased stretch (basic residues) spans 1071-1082 (RSKKSKPSTGKR). The residue at position 1112 (Thr1112) is a Phosphothreonine. Phosphoserine is present on residues Ser1177 and Ser1178.

The protein belongs to the SCC3 family. Interacts directly with RAD21 in cohesin complex. Cohesin complexes are composed of a heterodimer between a SMC1 protein (SMC1A or SMC1B) and SMC3, which are attached via their hinge domain, and RAD21 which link them at their heads, and one STAG protein (STAG1, STAG2 or STAG3). In cohesin complexes, STAG2 is mutually exclusive with STAG1 and STAG3. In terms of processing, phosphorylated by PLK1. The large dissociation of cohesin from chromosome arms during prophase is partly due to its phosphorylation.

It localises to the nucleus. It is found in the chromosome. Its subcellular location is the centromere. Functionally, component of cohesin complex, a complex required for the cohesion of sister chromatids after DNA replication. The cohesin complex apparently forms a large proteinaceous ring within which sister chromatids can be trapped. At anaphase, the complex is cleaved and dissociates from chromatin, allowing sister chromatids to segregate. The cohesin complex may also play a role in spindle pole assembly during mitosis. The protein is Cohesin subunit SA-2 (STAG2) of Homo sapiens (Human).